A 715-amino-acid chain; its full sequence is Fatty acid oxidation complex subunit alpha (715 aa).

The segment at 1 to 190 (MTTTSAFMLN…RAGLVDDVVP (190 aa)) is enoyl-CoA hydratase. The interval 306–715 (GPLNSVGILG…WTNGETDQGN (410 aa)) is 3-hydroxyacyl-CoA dehydrogenase.

This sequence in the N-terminal section; belongs to the enoyl-CoA hydratase/isomerase family. The protein in the central section; belongs to the 3-hydroxyacyl-CoA dehydrogenase family. In terms of assembly, heterotetramer of two alpha chains (FadJ) and two beta chains (FadI).

The protein localises to the cytoplasm. The catalysed reaction is a (3S)-3-hydroxyacyl-CoA = a (2E)-enoyl-CoA + H2O. The enzyme catalyses a 4-saturated-(3S)-3-hydroxyacyl-CoA = a (3E)-enoyl-CoA + H2O. It carries out the reaction a (3S)-3-hydroxyacyl-CoA + NAD(+) = a 3-oxoacyl-CoA + NADH + H(+). It catalyses the reaction (3S)-3-hydroxybutanoyl-CoA = (3R)-3-hydroxybutanoyl-CoA. It participates in lipid metabolism; fatty acid beta-oxidation. Catalyzes the formation of a hydroxyacyl-CoA by addition of water on enoyl-CoA. Also exhibits 3-hydroxyacyl-CoA epimerase and 3-hydroxyacyl-CoA dehydrogenase activities. The protein is Fatty acid oxidation complex subunit alpha of Salmonella schwarzengrund (strain CVM19633).